The primary structure comprises 192 residues: Cytochrome c oxidase assembly factor 8 (192 aa).

The transit peptide at 1-26 (MAALRPGSRALRRLLCRSFSGGGGVR) directs the protein to the mitochondrion.

The protein belongs to the COA8 family. In terms of processing, N-terminal mitochondrial targeting sequence is cleaved from the mature protein once in the mitochondrion. In normal conditions, the cytoplasmic precursor protein is rapidly degraded by the ubiquitination-proteasome system (UPS). Oxidative stress induces protein stabilization and import into mitochondria where it protects COX from degradation. As to expression, expressed in atherosclerotic smooth muscle cells (at protein level). Expressed in aorta, brain, heart, kidney, liver, lung and spleen. Isoform 1 is strongly expressed in Kidney. Isoform 2 is strongly expressed in brain.

It localises to the mitochondrion inner membrane. Its function is as follows. Required for cytochrome c complex (COX) IV assembly and function Protects COX assembly from oxidation-induced degradation, COX being the terminal component of the mitochondrial respiratory chain. The sequence is that of Cytochrome c oxidase assembly factor 8 (Coa8) from Mus musculus (Mouse).